Consider the following 387-residue polypeptide: Succinate--CoA ligase [ADP-forming] subunit beta (387 aa).

The region spanning 9–236 (RDLFESYGVP…AAAADPLEAK (228 aa)) is the ATP-grasp domain. Residues K45, 52–54 (GRG), A94, and E99 contribute to the ATP site. N191 and D205 together coordinate Mg(2+). Substrate contacts are provided by residues N256 and 318-320 (GIT).

It belongs to the succinate/malate CoA ligase beta subunit family. In terms of assembly, heterotetramer of two alpha and two beta subunits. Mg(2+) is required as a cofactor.

The enzyme catalyses succinate + ATP + CoA = succinyl-CoA + ADP + phosphate. It catalyses the reaction GTP + succinate + CoA = succinyl-CoA + GDP + phosphate. It functions in the pathway carbohydrate metabolism; tricarboxylic acid cycle; succinate from succinyl-CoA (ligase route): step 1/1. Succinyl-CoA synthetase functions in the citric acid cycle (TCA), coupling the hydrolysis of succinyl-CoA to the synthesis of either ATP or GTP and thus represents the only step of substrate-level phosphorylation in the TCA. The beta subunit provides nucleotide specificity of the enzyme and binds the substrate succinate, while the binding sites for coenzyme A and phosphate are found in the alpha subunit. This is Succinate--CoA ligase [ADP-forming] subunit beta from Clavibacter michiganensis subsp. michiganensis (strain NCPPB 382).